Consider the following 552-residue polypeptide: B-cell linker protein (552 aa).

Residues 50–431 (TGKDTWDRLK…SSISSISSTA (382 aa)) are disordered. Residues 67–76 (PRRDYASEHA) are compositionally biased toward basic and acidic residues. The segment covering 77–93 (DNEEEQWSDDFDSDYEN) has biased composition (acidic residues). Phosphotyrosine; by SYK occurs at positions 91, 103, 115, 194, 205, and 249. Residues 188 to 205 (SDDEDNYIVPVDNDDDNY) show a composition bias toward acidic residues. Composition is skewed to basic and acidic residues over residues 277 to 295 (NAEH…KLDA), 309 to 322 (PKTD…DENH), and 368 to 382 (NEDK…RGSS). The region spanning 442–549 (WYAATCDRKT…KDSTKLKYIV (108 aa)) is the SH2 domain.

As to quaternary structure, associates with PLCG1, VAV1 and NCK1 in a B-cell antigen receptor-dependent fashion. Interacts through its SH2 domain with CD79A. Interacts with VAV3, PLCG2 and GRB2. Post-translationally, following BCR activation, phosphorylated on tyrosine residues by SYK and LYN. When phosphorylated, serves as a scaffold to assemble downstream targets of antigen activation, including PLCG1, VAV1, GRB2 and NCK1. Phosphorylation is required for both Ca(2+) and MAPK signaling pathways. Phosphorylation of Tyr-103, Tyr-194 and Tyr-205 facilitates PLCG1 binding. Phosphorylation of Tyr-115 facilitates BTK binding. Phosphorylation of Tyr-91 facilitates VAV1 and NCK1 binding. As to expression, highly expressed in the bursa, very low expression in ovary and spleen. Expression was variable among B-cell lines. Highly expressed in immature B-cell lines such as DT40 and CL18, low expression was seen in relatively mature B-cell lines, such as 293B9 and 249L4. No expression was seen in T-cell lines.

It is found in the cytoplasm. The protein resides in the cell membrane. Functions as a central linker protein, downstream of the B-cell receptor (BCR), bridging the SYK kinase to a multitude of signaling pathways and regulating biological outcomes of B-cell function and development. Plays a role in the activation of ERK/EPHB2, MAP kinase p38 and JNK. Modulates AP1 activation. Important for the activation of NF-kappa-B and NFAT. Plays an important role in BCR-mediated PLCG1 and PLCG2 activation and Ca(2+) mobilization and is required for trafficking of the BCR to late endosomes. However, does not seem to be required for pre-BCR-mediated activation of MAP kinase and phosphatidyl-inositol 3 (PI3) kinase signaling. May be required for the RAC1-JNK pathway. Plays a critical role in orchestrating the pro-B cell to pre-B cell transition. Plays a critical role in B-cell development in the bursa. Plays an important role in BCR-induced apoptosis. This is B-cell linker protein (BLNK) from Gallus gallus (Chicken).